We begin with the raw amino-acid sequence, 145 residues long: D-aminoacyl-tRNA deacylase (145 aa).

The Gly-cisPro motif, important for rejection of L-amino acids signature appears at 137–138 (GP).

The protein belongs to the DTD family. Homodimer.

It is found in the cytoplasm. It catalyses the reaction glycyl-tRNA(Ala) + H2O = tRNA(Ala) + glycine + H(+). The enzyme catalyses a D-aminoacyl-tRNA + H2O = a tRNA + a D-alpha-amino acid + H(+). In terms of biological role, an aminoacyl-tRNA editing enzyme that deacylates mischarged D-aminoacyl-tRNAs. Also deacylates mischarged glycyl-tRNA(Ala), protecting cells against glycine mischarging by AlaRS. Acts via tRNA-based rather than protein-based catalysis; rejects L-amino acids rather than detecting D-amino acids in the active site. By recycling D-aminoacyl-tRNA to D-amino acids and free tRNA molecules, this enzyme counteracts the toxicity associated with the formation of D-aminoacyl-tRNA entities in vivo and helps enforce protein L-homochirality. The chain is D-aminoacyl-tRNA deacylase from Salmonella paratyphi C (strain RKS4594).